A 363-amino-acid chain; its full sequence is Peptide chain release factor 1 (363 aa).

Residue glutamine 237 is modified to N5-methylglutamine.

Belongs to the prokaryotic/mitochondrial release factor family. In terms of processing, methylated by PrmC. Methylation increases the termination efficiency of RF1.

Its subcellular location is the cytoplasm. Peptide chain release factor 1 directs the termination of translation in response to the peptide chain termination codons UAG and UAA. This is Peptide chain release factor 1 from Mesoplasma florum (strain ATCC 33453 / NBRC 100688 / NCTC 11704 / L1) (Acholeplasma florum).